The primary structure comprises 293 residues: Caspase-6 (293 aa).

The segment at Met1 to Thr20 is disordered. Positions Met1–Asp23 are excised as a propeptide. Positions Lys42 to Arg44 are tri-arginine exosite. Ser79 is subject to Phosphoserine. Residue His121 is part of the active site. The segment at Asn125 to Leu142 is 130's region. Cys163 is a catalytic residue. Positions His180–Asp193 are excised as a propeptide. A Phosphoserine modification is found at Ser257. 2 S-palmitoyl cysteine lipidation sites follow: Cys264 and Cys277.

This sequence belongs to the peptidase C14A family. As to quaternary structure, heterotetramer that consists of two anti-parallel arranged heterodimers, each one formed by a 18 kDa (p18) and a 11 kDa (p11) subunits. Interacts with BIRC6/bruce. Interacts with RIPK3. Heterotetramer that consists of two anti-parallel arranged heterodimers, each one formed by a 18 kDa (Caspase-6 subunit p18) and a 11 kDa (Caspase-6 subunit p11) subunit. In terms of processing, phosphorylated by NUAK1; phosphorylation inhibits self-activation. Phosphorylation at Ser-257 by AMP-activated protein kinase (PRKAA1 or PRKAA2) inhibits autocleavage, preventing caspase activation, thereby preventing hepatocyte apoptosis. Post-translationally, palmitoylation by ZDHHC17 blocks dimerization and subsequent activation, leading to inhibit the cysteine protease activity. Can be cleaved and activated by different caspases, depending on the context. Cleaved and activated by caspase-8 (CASP8) and subsequently by caspase-3 (CASP3). Can also undergo autoactivation by mediating autocleavage at Asp-179 and Asp-193, while it is not able to cleave its N-terminal disordered prodomain. Cleaved and activated by CASP1, possibly in the context of inflammation.

The protein localises to the cytoplasm. Its subcellular location is the nucleus. It catalyses the reaction Strict requirement for Asp at position P1 and has a preferred cleavage sequence of Val-Glu-His-Asp-|-.. During activation, the N-terminal disordered prodomain is removed by cleavage. Concomitantly, double cleavage gives rise to a large 18-kDa and a small 11-kDa subunit. The two large and two small subunits then assemble to form the active CASP6 complex. Can be cleaved and activated by different caspases, depending on the context. Cleaved and activated by caspase-8 (CASP8) and subsequently by caspase-3 (CASP3). Can also undergo autoactivation by mediating autocleavage at Asp-179 and Asp-193, while it is not able to cleave its N-terminal disordered prodomain. Intramolecular cleavage at Asp-193 is a prerequisite for CASP6 self-activation. Cleaved and activated by CASP1 in neurons, possibly in the context of inflammation. Phosphorylation at Ser-257 inhibits autocleavage, preventing caspase activation. Functionally, cysteine protease that plays essential roles in programmed cell death, axonal degeneration, development and innate immunity. Acts as a non-canonical executioner caspase during apoptosis: localizes in the nucleus and cleaves the nuclear structural protein NUMA1 and lamin A/LMNA thereby inducing nuclear shrinkage and fragmentation. Lamin-A/LMNA cleavage is required for chromatin condensation and nuclear disassembly during apoptotic execution. Acts as a regulator of liver damage by promoting hepatocyte apoptosis: in absence of phosphorylation by AMP-activated protein kinase (AMPK), catalyzes cleavage of BID, leading to cytochrome c release, thereby participating in nonalcoholic steatohepatitis. Cleaves PARK7/DJ-1 in cells undergoing apoptosis. Involved in intrinsic apoptosis by mediating cleavage of RIPK1. Furthermore, cleaves many transcription factors such as NF-kappa-B and cAMP response element-binding protein/CREBBP. Cleaves phospholipid scramblase proteins XKR4 and XKR9. In addition to apoptosis, involved in different forms of programmed cell death. Plays an essential role in defense against viruses by acting as a central mediator of the ZBP1-mediated pyroptosis, apoptosis, and necroptosis (PANoptosis), independently of its cysteine protease activity. PANoptosis is a unique inflammatory programmed cell death, which provides a molecular scaffold that allows the interactions and activation of machinery required for inflammasome/pyroptosis, apoptosis and necroptosis. Mechanistically, interacts with RIPK3 and enhances the interaction between RIPK3 and ZBP1, leading to ZBP1-mediated inflammasome activation and cell death. Plays an essential role in axon degeneration during axon pruning which is the remodeling of axons during neurogenesis but not apoptosis. Regulates B-cell programs both during early development and after antigen stimulation. This Bos taurus (Bovine) protein is Caspase-6.